Here is a 792-residue protein sequence, read N- to C-terminus: Phosphatidylinositol 4-phosphate 5-kinase type-1 sktl (792 aa).

Over residues 1-21 (MDTRVELELEPVGKQDRLKDQ) the composition is skewed to basic and acidic residues. 5 disordered regions span residues 1–74 (MDTR…QPGT), 105–139 (TQTP…KKLG), 423–446 (AKLQ…DAPE), 577–612 (TPTF…PTNA), and 640–714 (AAST…TDLS). Polar residues-rich tracts occupy residues 52–62 (QTASPDQEATP) and 105–131 (TQTP…STTG). Residues 155–573 (QSKQIMGSIQ…RFQDAMGKQV (419 aa)) enclose the PIPK domain. Positions 642–658 (STSSLQQQRSSNQSNNN) are enriched in low complexity. Polar residues predominate over residues 678–702 (EPSSTYHTQYSYDSSGRTGSALTSD).

Interacts with ash2 (via B30.2/SPRY domain); the interaction is direct and seems to be specific for ash2 isoform B.

It localises to the cytoplasm. The protein resides in the cell cortex. It is found in the nucleus. The protein localises to the chromosome. Its subcellular location is the apical cell membrane. It localises to the cell projection. The protein resides in the cilium. It is found in the flagellum membrane. The catalysed reaction is a 1,2-diacyl-sn-glycero-3-phospho-(1D-myo-inositol 4-phosphate) + ATP = a 1,2-diacyl-sn-glycero-3-phospho-(1D-myo-inositol-4,5-bisphosphate) + ADP + H(+). Its function is as follows. Catalyzes the phosphorylation of phosphatidylinositol 4-phosphate (PtdIns[4]P) to form phosphatidylinositol 4,5-bisphosphate (PtdIns[4,5]P(2)), a lipid second messenger that regulates several cellular processes such as signal transduction, vesicle trafficking, actin cytoskeleton dynamics, cell adhesion, and cell motility. PtdIns[4,5]P(2) can directly act as a second messenger or can be utilized as a precursor to generate other second messengers: inositol 1,4,5-trisphosphate (IP3), diacylglycerol (DAG) or phosphatidylinositol-3,4,5-trisphosphate (PtdIns[3,4,5]P(3)). Required for germline development during oogenesis. Sktl is the major phosphatidylinositol 4-phosphate 5-kinase responsible for enrichment of PtdIns[4,5]P(2) in the apical plasma membrane of the oocyte and follicular epithelium cells of the egg chamber during oogenesis. Involved in nuclear anchoring and microtubule organization required for targeted mRNA transport during maintenance of oocyte polarity. The PtdIns[4,5]P(2) produced by sktl is required for maintenance of cellular polarity, prevention of the epithelial-mesenchymal transition process, maintenance of adherens junctions and regulation of apical constriction, probably by affecting polarized cortical recruitment of PAR proteins and their effectors, including baz/bazooka, aPKC, par-1 and l(2)gl. Involved in actin cytoskeleton organization probably through PtdIns[4,5]P(2)-mediated regulation of Moe/Moesin phosphorylation. Involved in PtdIns[4,5]P(2)-mediated apical recruitment of the formin dia/diaphanous in tubular epithelial cells. Involved in anterodorsal cell morphogenesis and eggshell dorsal appendage formation, probably through regulation of apical constriction by PtdIns[4,5]P(2) during tubulogenesis. Required for cell viability or proliferation during wing and eye imaginal disk development. May be involved in cytoskeletal regulation during sensory bristle development. Together with mys/integrin beta localizes to the trailing edge of larval epidermal cells in a JNK signaling-dependent manner during wound healing and is required for setting up cell polarity and re-epithelialization. Required for polarization of elongating spermatid cysts possibly by generation of PtdIns[4,5]P(2) involved in mediating membrane association and orientation of the nucleus-basal body pair. Probably involved in PtdIns[4,5]P(2)-mediated recruitment of exocyst proteins that may mediate membrane addition during spermatid elongation. Involved in maintenance of specialised cell contacts known as slit diaphragms required for nephrocyte morphogenesis and function. Regulates nephrocyte endocytosis, possibly through PtdIns[4,5]P(2)-mediated recruitment of effector proteins. Not required for nervous system development or neurotransmitter release at the neuromuscular junction. Together with ash2 probably plays a role in maintenance of transcriptionally active chromatin through down-regulation of histone H1 hyperphosphorylation. The polypeptide is Phosphatidylinositol 4-phosphate 5-kinase type-1 sktl (Drosophila melanogaster (Fruit fly)).